Reading from the N-terminus, the 230-residue chain is Probable dual specificity protein phosphatase DDB_G0283417 (230 aa).

Residues 78 to 230 (NNNYESINLY…LEIFEKELLF (153 aa)) enclose the Tyrosine-protein phosphatase domain. Catalysis depends on Cys174, which acts as the Phosphocysteine intermediate.

Belongs to the protein-tyrosine phosphatase family. Non-receptor class dual specificity subfamily.

The catalysed reaction is O-phospho-L-tyrosyl-[protein] + H2O = L-tyrosyl-[protein] + phosphate. It catalyses the reaction O-phospho-L-seryl-[protein] + H2O = L-seryl-[protein] + phosphate. The enzyme catalyses O-phospho-L-threonyl-[protein] + H2O = L-threonyl-[protein] + phosphate. Its function is as follows. Has a dual specificity toward Ser/Thr and Tyr-containing proteins. The protein is Probable dual specificity protein phosphatase DDB_G0283417 of Dictyostelium discoideum (Social amoeba).